Reading from the N-terminus, the 357-residue chain is Tribbles homolog 3 (357 aa).

A disordered region spans residues 1-63 (MRASPLAVPA…PAPVHAPDVT (63 aa)). Residues 1–127 (MRASPLAVPA…GHVARPAEVL (127 aa)) are interaction with DDIT3/CHOP. One can recognise a Protein kinase domain in the interval 68 to 316 (LGPYVLLEPE…SGILLHPWLR (249 aa)). Positions 333-357 (DQVVPEGPGLEEAEEEGERDMGLYG) are disordered. The span at 341 to 350 (GLEEAEEEGE) shows a compositional bias: acidic residues.

It belongs to the protein kinase superfamily. CAMK Ser/Thr protein kinase family. Tribbles subfamily. As to quaternary structure, interacts with AKT1, AKT2, MAP2K1 and MAP2K7. Interacts with ATF4. Interacts with DDIT3/CHOP and inhibits its interaction with EP300/P300. Interacts with APOBEC3C. Interacts (via N-terminus) with APOBEC3A. Interacts with RELA.

It is found in the nucleus. Its function is as follows. Inactive protein kinase which acts as a regulator of the integrated stress response (ISR), a process for adaptation to various stress. Inhibits the transcriptional activity of DDIT3/CHOP and is involved in DDIT3/CHOP-dependent cell death during ER stress. May play a role in programmed neuronal cell death but does not appear to affect non-neuronal cells. Acts as a negative feedback regulator of the ATF4-dependent transcription during the ISR: while TRIB3 expression is promoted by ATF4, TRIB3 protein interacts with ATF4 and inhibits ATF4 transcription activity. Disrupts insulin signaling by binding directly to Akt kinases and blocking their activation. May bind directly to and mask the 'Thr-308' phosphorylation site in AKT1. Interacts with the NF-kappa-B transactivator p65 RELA and inhibits its phosphorylation and thus its transcriptional activation activity. Interacts with MAPK kinases and regulates activation of MAP kinases. Can inhibit APOBEC3A editing of nuclear DNA. In Bos taurus (Bovine), this protein is Tribbles homolog 3 (TRIB3).